Consider the following 1461-residue polypeptide: Potassium channel K2 (1461 aa).

6 consecutive transmembrane segments (helical) span residues 44–64 (IIEGLLCIITGVILKLSLIYI), 142–162 (FNYYFCNIRDMCYTIIWYISL), 183–203 (IYNMLLILLSTSYIDLVMVII), 218–238 (LIDIFFSAPCTYLFSKFIFVF), 242–262 (IDIYFMMGFLRNIKIFLNVSY), and 281–301 (IVLGVLLLCNAFASTIYTIQA). The segment at residues 322 to 340 (YFYFSIISISTVGYGDIFP) is an intramembrane region (pore-forming). Residues 349-369 (CIIFIFWTFIWVPIQFNDLII) form a helical membrane-spanning segment. The interval 771–794 (KRDDFDNNNNNNNNNIVKSRKKGR) is disordered.

In terms of assembly, may form oligomers or interact with other proteins.

It is found in the membrane. Functionally, contributes to transmembrane potassium transport. The chain is Potassium channel K2 from Plasmodium falciparum (isolate 3D7).